Consider the following 322-residue polypeptide: Malate dehydrogenase 1 (322 aa).

NAD(+) is bound by residues glycine 10–glycine 15 and aspartate 34. 2 residues coordinate substrate: arginine 83 and arginine 89. NAD(+)-binding positions include asparagine 96 and isoleucine 119 to asparagine 121. Substrate-binding residues include asparagine 121 and arginine 152. Residue histidine 176 is the Proton acceptor of the active site.

This sequence belongs to the LDH/MDH superfamily. MDH type 3 family.

The enzyme catalyses (S)-malate + NAD(+) = oxaloacetate + NADH + H(+). Functionally, catalyzes the reversible oxidation of malate to oxaloacetate. The protein is Malate dehydrogenase 1 of Rhodopseudomonas palustris (strain BisB18).